We begin with the raw amino-acid sequence, 404 residues long: Zinc finger CCCH domain-containing protein 3 (404 aa).

5 C3H1-type zinc fingers span residues 47 to 75 (RPGERDCQFYLRTGLCGYGSSCRYNHPTH), 90 to 118 (RIGQPDCEYFLKTGACKYGPTCKYHHPKD), 135 to 163 (RLGEKPCPYYLRTGTCRFGVACKFHHPQP), 261 to 289 (SSDQPECRFFMNTGTCKYGDDCKYSHPGV), and 307 to 335 (RPGQPACGNFRSYGFCKFGPNCKFDHPML). Over residues 350–374 (FASPVTTHQRISPTPNRSDSKSLSN) the composition is skewed to polar residues. Residues 350 to 404 (FASPVTTHQRISPTPNRSDSKSLSNGKPDVKKESSETEKPDNGEVQDLSEDASSP) form a disordered region. Over residues 377-391 (PDVKKESSETEKPDN) the composition is skewed to basic and acidic residues.

The protein localises to the nucleus. Functionally, possesses RNA-binding and ribonuclease activities in vitro. In Arabidopsis thaliana (Mouse-ear cress), this protein is Zinc finger CCCH domain-containing protein 3.